Reading from the N-terminus, the 410-residue chain is Multifunctional CCA protein (410 aa).

ATP is bound by residues Gly8 and Arg11. CTP is bound by residues Gly8 and Arg11. Residues Asp21 and Asp23 each contribute to the Mg(2+) site. Positions 91, 137, and 140 each coordinate ATP. Positions 91, 137, and 140 each coordinate CTP. The HD domain maps to Thr228–Tyr329.

This sequence belongs to the tRNA nucleotidyltransferase/poly(A) polymerase family. Bacterial CCA-adding enzyme type 1 subfamily. In terms of assembly, monomer. Can also form homodimers and oligomers. The cofactor is Mg(2+). Requires Ni(2+) as cofactor.

It catalyses the reaction a tRNA precursor + 2 CTP + ATP = a tRNA with a 3' CCA end + 3 diphosphate. The catalysed reaction is a tRNA with a 3' CCA end + 2 CTP + ATP = a tRNA with a 3' CCACCA end + 3 diphosphate. In terms of biological role, catalyzes the addition and repair of the essential 3'-terminal CCA sequence in tRNAs without using a nucleic acid template. Adds these three nucleotides in the order of C, C, and A to the tRNA nucleotide-73, using CTP and ATP as substrates and producing inorganic pyrophosphate. tRNA 3'-terminal CCA addition is required both for tRNA processing and repair. Also involved in tRNA surveillance by mediating tandem CCA addition to generate a CCACCA at the 3' terminus of unstable tRNAs. While stable tRNAs receive only 3'-terminal CCA, unstable tRNAs are marked with CCACCA and rapidly degraded. This is Multifunctional CCA protein from Pseudomonas aeruginosa (strain ATCC 15692 / DSM 22644 / CIP 104116 / JCM 14847 / LMG 12228 / 1C / PRS 101 / PAO1).